A 402-amino-acid polypeptide reads, in one-letter code: Argininosuccinate synthase (402 aa).

ATP contacts are provided by residues 10–18 (AYSGGLDTS) and A38. Residue Y90 participates in L-citrulline binding. ATP is bound at residue G120. 3 residues coordinate L-aspartate: T122, N126, and D127. Residue N126 participates in L-citrulline binding. Positions 130, 179, 188, 264, and 276 each coordinate L-citrulline.

It belongs to the argininosuccinate synthase family. Type 1 subfamily. In terms of assembly, homotetramer.

The protein resides in the cytoplasm. The catalysed reaction is L-citrulline + L-aspartate + ATP = 2-(N(omega)-L-arginino)succinate + AMP + diphosphate + H(+). It participates in amino-acid biosynthesis; L-arginine biosynthesis; L-arginine from L-ornithine and carbamoyl phosphate: step 2/3. This is Argininosuccinate synthase from Psychromonas ingrahamii (strain DSM 17664 / CCUG 51855 / 37).